Reading from the N-terminus, the 700-residue chain is Chaperonin CPN60, mitochondrial (700 aa).

The transit peptide at 1-9 directs the protein to the mitochondrion; that stretch reads MRMKRIHIL. Residues 636–700 form a disordered region; sequence TYKHKLHDDE…SMNDEYNYDE (65 aa). The segment covering 644-700 has biased composition (acidic residues); that stretch reads DEDTDEDDEEDEDDEDDEDDLDDDDYDDEDEEDEEDEEDEDDEDDEDSMNDEYNYDE.

The protein belongs to the chaperonin (HSP60) family.

The protein resides in the mitochondrion matrix. Functionally, implicated in mitochondrial protein import and macromolecular assembly. May facilitate the correct folding of imported proteins. May also prevent misfolding and promote the refolding and proper assembly of unfolded polypeptides generated under stress conditions in the mitochondrial matrix. The chain is Chaperonin CPN60, mitochondrial from Plasmodium falciparum (isolate FCR-3 / Gambia).